Consider the following 598-residue polypeptide: MPCVQAQYGSSPQGASPASQGYSYHSSGEYSSDFLTPEFVKFSMDLTNTEITATTSLPSFSTFMDNYSTGYDVKPPCLYQMPLSGQQSSIKVEDIQMHNYQQHSHLPPQSEEMMPHSGSVYYKPSSPPTPTTPGFQVQHSPMWDDPGSLHNFHQNYVATTHMIEQRKTPVSRLSLFSFKQSPPGTPVSSCQMRFDGPLHVPMNPEPAGSHHVVDGQTFAVPNPIRKPASMGFPGLQIGHASQLLDTQVPSPPSRGSPSNEGLCAVCGDNAACQHYGVRTCEGCKGFFKRTVQKNAKYVCLANKNCPVDKRRRNRCQYCRFQKCLAVGMVKEVVRTDSLKGRRGRLPSKPKSPQEPSPPSPPVSLISALVRAHVDSNPAMTSLDYSRFQANPDYQMSGDDTQHIQQFYDLLTGSMEIIRGWAEKIPGFADLPKADQDLLFESAFLELFVLRLAYRSNPVEGKLIFCNGVVLHRLQCVRGFGEWIDSIVEFSSNLQNMNIDISAFSCIAALAMVTERHWLKEPKRVEELQNKIVNCLKDHVTFNNGGLNRPNYLSKLLGKLPELRTLCTQGLQRIFYLKLEDLVPPPAIIDKLFLDTLPF.

The tract at residues 1–22 (MPCVQAQYGSSPQGASPASQGY) is disordered. Residues 7–18 (QYGSSPQGASPA) show a composition bias toward polar residues. The nuclear receptor DNA-binding region spans 260-335 (EGLCAVCGDN…VGMVKEVVRT (76 aa)). NR C4-type zinc fingers lie at residues 263–283 (CAVC…CEGC) and 299–318 (CLAN…CQYC). The short motif at 287–314 (FKRTVQKNAKYVCLANKNCPVDKRRRNR) is the Bipartite nuclear localization signal (NLS1) element. The disordered stretch occupies residues 337–361 (SLKGRRGRLPSKPKSPQEPSPPSPP). The short motif at 338 to 350 (LKGRRGRLPSKPK) is the Nuclear localization signal (NLS1) element. A compositionally biased stretch (pro residues) spans 352–361 (PQEPSPPSPP). Residues 360–595 (PPVSLISALV…AIIDKLFLDT (236 aa)) enclose the NR LBD domain. Residues 443–452 (FLELFVLRLA) carry the nuclear export sequence (NES1) motif. The short motif at 568 to 577 (QGLQRIFYLK) is the nuclear export sequence (NES2) element.

Belongs to the nuclear hormone receptor family. In terms of assembly, interacts with SFPQ, NCOR2, SIN3A and HADC1. The interaction with NCOR2 increases in the absence of PITX3. Interacts with PER2.

Its subcellular location is the cytoplasm. It is found in the nucleus. Functionally, transcriptional regulator which is important for the differentiation and maintenance of meso-diencephalic dopaminergic (mdDA) neurons during development. It is crucial for expression of a set of genes such as SLC6A3, SLC18A2, TH and DRD2 which are essential for development of mdDA neurons. The sequence is that of Nuclear receptor subfamily 4 group A member 2 (NR4A2) from Pongo abelii (Sumatran orangutan).